The primary structure comprises 85 residues: uncharacterized protein (85 aa).

The protein belongs to the SF3B5 family.

This is an uncharacterized protein from Schizosaccharomyces pombe (strain 972 / ATCC 24843) (Fission yeast).